The following is a 625-amino-acid chain: Phosphomethylpyrimidine synthase (625 aa).

Residues Asn230, Met259, Tyr288, His324, 344–346 (SRG), 385–388 (DGLR), and Glu424 contribute to the substrate site. His428 contacts Zn(2+). A substrate-binding site is contributed by Tyr451. A Zn(2+)-binding site is contributed by His492. Positions 572, 575, and 580 each coordinate [4Fe-4S] cluster.

It belongs to the ThiC family. As to quaternary structure, homodimer. Requires [4Fe-4S] cluster as cofactor.

It catalyses the reaction 5-amino-1-(5-phospho-beta-D-ribosyl)imidazole + S-adenosyl-L-methionine = 4-amino-2-methyl-5-(phosphooxymethyl)pyrimidine + CO + 5'-deoxyadenosine + formate + L-methionine + 3 H(+). It functions in the pathway cofactor biosynthesis; thiamine diphosphate biosynthesis. In terms of biological role, catalyzes the synthesis of the hydroxymethylpyrimidine phosphate (HMP-P) moiety of thiamine from aminoimidazole ribotide (AIR) in a radical S-adenosyl-L-methionine (SAM)-dependent reaction. The polypeptide is Phosphomethylpyrimidine synthase (Xanthomonas oryzae pv. oryzae (strain MAFF 311018)).